The following is a 299-amino-acid chain: Bifunctional protein FolD (299 aa).

NADP(+)-binding positions include 168–170, Ser-193, and Ile-234; that span reads GRS.

The protein belongs to the tetrahydrofolate dehydrogenase/cyclohydrolase family. As to quaternary structure, homodimer.

The enzyme catalyses (6R)-5,10-methylene-5,6,7,8-tetrahydrofolate + NADP(+) = (6R)-5,10-methenyltetrahydrofolate + NADPH. It carries out the reaction (6R)-5,10-methenyltetrahydrofolate + H2O = (6R)-10-formyltetrahydrofolate + H(+). It functions in the pathway one-carbon metabolism; tetrahydrofolate interconversion. Catalyzes the oxidation of 5,10-methylenetetrahydrofolate to 5,10-methenyltetrahydrofolate and then the hydrolysis of 5,10-methenyltetrahydrofolate to 10-formyltetrahydrofolate. The polypeptide is Bifunctional protein FolD (Bartonella bacilliformis (strain ATCC 35685 / KC583 / Herrer 020/F12,63)).